The primary structure comprises 317 residues: Acetylglutamate kinase (317 aa).

Substrate-binding positions include Gly75–Gly76, Arg97, and Asn196.

Belongs to the acetylglutamate kinase family. ArgB subfamily.

The protein localises to the cytoplasm. The catalysed reaction is N-acetyl-L-glutamate + ATP = N-acetyl-L-glutamyl 5-phosphate + ADP. Its pathway is amino-acid biosynthesis; L-arginine biosynthesis; N(2)-acetyl-L-ornithine from L-glutamate: step 2/4. Catalyzes the ATP-dependent phosphorylation of N-acetyl-L-glutamate. The chain is Acetylglutamate kinase from Corynebacterium jeikeium (strain K411).